The chain runs to 162 residues: Ribosome maturation factor RimP (162 aa).

This sequence belongs to the RimP family.

It localises to the cytoplasm. Required for maturation of 30S ribosomal subunits. The protein is Ribosome maturation factor RimP of Beutenbergia cavernae (strain ATCC BAA-8 / DSM 12333 / CCUG 43141 / JCM 11478 / NBRC 16432 / NCIMB 13614 / HKI 0122).